We begin with the raw amino-acid sequence, 89 residues long: RNA-binding protein Hfq (89 aa).

One can recognise a Sm domain in the interval 14-73 (DPYLNALRKEKINVAIYLVNGVKLQGRVDSFDQFVVLLRSNVTQMVYKHAISTIVPARDP).

The protein belongs to the Hfq family. In terms of assembly, homohexamer.

In terms of biological role, RNA chaperone that binds small regulatory RNA (sRNAs) and mRNAs to facilitate mRNA translational regulation in response to envelope stress, environmental stress and changes in metabolite concentrations. Also binds with high specificity to tRNAs. The chain is RNA-binding protein Hfq from Hydrogenovibrio crunogenus (strain DSM 25203 / XCL-2) (Thiomicrospira crunogena).